Here is a 525-residue protein sequence, read N- to C-terminus: GMP synthase [glutamine-hydrolyzing] (525 aa).

The Glutamine amidotransferase type-1 domain maps to 8–207 (KILILDFGSQ…ALDICGCAAN (200 aa)). The active-site Nucleophile is Cys-85. Residues His-181 and Glu-183 contribute to the active site. Residues 208–400 (WKPSSIIEDA…LGLPYNMLYR (193 aa)) form the GMPS ATP-PPase domain. 235–241 (SGGVDSS) contributes to the ATP binding site.

In terms of assembly, homodimer.

It carries out the reaction XMP + L-glutamine + ATP + H2O = GMP + L-glutamate + AMP + diphosphate + 2 H(+). Its pathway is purine metabolism; GMP biosynthesis; GMP from XMP (L-Gln route): step 1/1. Functionally, catalyzes the synthesis of GMP from XMP. The polypeptide is GMP synthase [glutamine-hydrolyzing] (Shewanella putrefaciens (strain CN-32 / ATCC BAA-453)).